The chain runs to 730 residues: DNA ligase (730 aa).

Positions 1–23 (MAGEQHAQPTSVPAEAREKHAQL) are disordered. Residues 44–48 (DAEFD), 93–94 (SL), and E124 contribute to the NAD(+) site. Residue K126 is the N6-AMP-lysine intermediate of the active site. 4 residues coordinate NAD(+): R147, E184, K300, and K324. Zn(2+)-binding residues include C418, C421, C437, and C443. One can recognise a BRCT domain in the interval 638-727 (EGPRPLEGLT…PEAAAEVALP (90 aa)).

The protein belongs to the NAD-dependent DNA ligase family. LigA subfamily. It depends on Mg(2+) as a cofactor. Mn(2+) is required as a cofactor.

The enzyme catalyses NAD(+) + (deoxyribonucleotide)n-3'-hydroxyl + 5'-phospho-(deoxyribonucleotide)m = (deoxyribonucleotide)n+m + AMP + beta-nicotinamide D-nucleotide.. Functionally, DNA ligase that catalyzes the formation of phosphodiester linkages between 5'-phosphoryl and 3'-hydroxyl groups in double-stranded DNA using NAD as a coenzyme and as the energy source for the reaction. It is essential for DNA replication and repair of damaged DNA. This chain is DNA ligase, found in Streptomyces avermitilis (strain ATCC 31267 / DSM 46492 / JCM 5070 / NBRC 14893 / NCIMB 12804 / NRRL 8165 / MA-4680).